The following is a 116-amino-acid chain: Ribosome-binding factor A (116 aa).

Belongs to the RbfA family. As to quaternary structure, monomer. Binds 30S ribosomal subunits, but not 50S ribosomal subunits or 70S ribosomes.

The protein resides in the cytoplasm. One of several proteins that assist in the late maturation steps of the functional core of the 30S ribosomal subunit. Associates with free 30S ribosomal subunits (but not with 30S subunits that are part of 70S ribosomes or polysomes). Required for efficient processing of 16S rRNA. May interact with the 5'-terminal helix region of 16S rRNA. This Streptococcus pneumoniae (strain ATCC 700669 / Spain 23F-1) protein is Ribosome-binding factor A.